Reading from the N-terminus, the 139-residue chain is Actin-depolymerizing factor (139 aa).

In terms of domain architecture, ADF-H spans 5 to 139 (SSGMAVDDEC…SMDIIKARAF (135 aa)).

Belongs to the actin-binding proteins ADF family. In terms of tissue distribution, preferentially in mature anther.

Functionally, actin-depolymerizing protein. Severs actin filaments (F-actin) and binds to actin monomers. The polypeptide is Actin-depolymerizing factor (Lilium longiflorum (Trumpet lily)).